We begin with the raw amino-acid sequence, 108 residues long: Nucleoid-associated protein Bphyt_1827 (108 aa).

Positions 87–108 (AQEKMGGMTSGLPLPPGFKLPF) are disordered. Over residues 99–108 (PLPPGFKLPF) the composition is skewed to pro residues.

The protein belongs to the YbaB/EbfC family. As to quaternary structure, homodimer.

It is found in the cytoplasm. Its subcellular location is the nucleoid. Binds to DNA and alters its conformation. May be involved in regulation of gene expression, nucleoid organization and DNA protection. This Paraburkholderia phytofirmans (strain DSM 17436 / LMG 22146 / PsJN) (Burkholderia phytofirmans) protein is Nucleoid-associated protein Bphyt_1827.